The chain runs to 231 residues: Protein INCA1 (231 aa).

Positions 75 to 99 are interaction with CCNA1 and CCNA1/CDK2 complex; essential for CDK2 inhibitory activity; sequence SLHPLEGLPPPEKLWRRKRKKLHLE. Residues 90-95 carry the Nuclear localization signal motif; the sequence is RRKRKK. At threonine 180 the chain carries Phosphothreonine.

This sequence belongs to the INCA family. In terms of assembly, interacts with CCNA1. Identified in a complex with CCNA1 and CDK2. Interacts with ZNF16; the interaction inhibits INCA1 activity and induces the cell cycle process. Interacts with SPACA9. Interacts with CCNA2, CCNB1 and CCNE1. Interacts with the CCNA1/CDK2 complex. Interacts with ING5, DAZAP2, RNF26, USP15, SPOUT1, DPH7, TRIM26 and RAB5C. In terms of processing, phosphorylated when part of a complex with CCNA1 and CDK2.

Its subcellular location is the nucleus. The protein localises to the cytoplasm. In terms of biological role, binds to CDK2-bound cyclins and inhibits the kinase activity of CDK2; binding to cyclins is critical for its function as CDK inhibitor. Inhibits cell growth and proliferation and may play a role in cell cycle control. Required for ING5-mediated regulation of S-phase progression, enhancement of Fas-induced apoptosis and inhibition of cell growth. The sequence is that of Protein INCA1 (Inca1) from Mus musculus (Mouse).